Here is a 154-residue protein sequence, read N- to C-terminus: Myoglobin (154 aa).

The region spanning 2 to 148 (GLSEAEWQLV…FRKDIAAKYK (147 aa)) is the Globin domain. Serine 4 bears the Phosphoserine mark. Nitrite is bound at residue histidine 65. Histidine 65 is an O2 binding site. Threonine 68 is subject to Phosphothreonine. Histidine 94 contributes to the heme b binding site.

It belongs to the globin family. Monomeric.

Its subcellular location is the cytoplasm. The protein resides in the sarcoplasm. The enzyme catalyses Fe(III)-heme b-[protein] + nitric oxide + H2O = Fe(II)-heme b-[protein] + nitrite + 2 H(+). It catalyses the reaction H2O2 + AH2 = A + 2 H2O. Its function is as follows. Monomeric heme protein which primary function is to store oxygen and facilitate its diffusion within muscle tissues. Reversibly binds oxygen through a pentacoordinated heme iron and enables its timely and efficient release as needed during periods of heightened demand. Depending on the oxidative conditions of tissues and cells, and in addition to its ability to bind oxygen, it also has a nitrite reductase activity whereby it regulates the production of bioactive nitric oxide. Under stress conditions, like hypoxia and anoxia, it also protects cells against reactive oxygen species thanks to its pseudoperoxidase activity. This Indopacetus pacificus (Longman's beaked whale) protein is Myoglobin (MB).